A 120-amino-acid polypeptide reads, in one-letter code: Large ribosomal subunit protein uL18 (120 aa).

It belongs to the universal ribosomal protein uL18 family. Part of the 50S ribosomal subunit; part of the 5S rRNA/L5/L18/L25 subcomplex. Contacts the 5S and 23S rRNAs.

Functionally, this is one of the proteins that bind and probably mediate the attachment of the 5S RNA into the large ribosomal subunit, where it forms part of the central protuberance. This Picosynechococcus sp. (strain ATCC 27264 / PCC 7002 / PR-6) (Agmenellum quadruplicatum) protein is Large ribosomal subunit protein uL18.